The following is a 122-amino-acid chain: Lycotoxin-Pa4a (122 aa).

The signal sequence occupies residues 1 to 20; sequence MKLGIFFSVFFLAMIHSCLS. A propeptide spanning residues 21–47 is cleaved from the precursor; it reads ETNEDKNLESYFREDDLKALSFGEYAR. 4 cysteine pairs are disulfide-bonded: C58-C73, C65-C82, C72-C100, and C84-C98.

It belongs to the neurotoxin 19 (CSTX) family. Expressed by the venom gland.

It is found in the secreted. It localises to the target cell membrane. Its function is as follows. Potent antibacterial peptide with anti-inflammatory properties. Inhibits both Gram-negative and Gram-positive bacteria by disrupting both the outer membrane and the cytosolic membrane of bacteria. Also downregulates the expression of pro-inflammatory mediators (cyclooxygenase-2 (PTGS2/COX2), nitric oxide-induced synthase (NOS2), IL-1 beta (IL1B), TNF-alpha (TNF)) and upregulates the level of anti-inflammatory cytokine (IL10) by inactivating mitogen-activated protein kinase signaling in a lipopolysaccharide-stimulated murine macrophage cell line. The polypeptide is Lycotoxin-Pa4a (Pardosa astrigera (Wolf spider)).